The chain runs to 402 residues: MYTSEERCNQRTQKRKIYNVCPQKGKKIFIHVHAITQIDGHIYQCLECKQNFCENLALIMCERTHTGEKPYKCDMCEKTFVQSSDLISHQRIHNYEKPYKCSKCEKSFWHHLALSGHQRTHAGKKFYTCDICGKNFGQSSDLLVHQRSHTGEKPYLCSECDKCFSRSTNLIRHRRTHTGEKPFKCLECEKAFSGKSDLISHQRTHTGERPYKCNKCEKSYRHRSAFIVHKRVHTGEKPYKCGACEKCFGQKSDLIVHQRVHTGEKPYKCLECMRSFTRSANLIRHQATHTHTFKCLEYEKSFNCSSDLIVHQRIHMEEKPHQWSTCESGFLLGMDFVAQQKMRTQTEELHYKYTVCDKSFHQSSALLQHQTVHTGEKPFICNVSEKGLELSPPHASEASQMS.

Residues 43 to 65 form a C2H2-type 1; atypical zinc finger; it reads YQCLECKQNFCENLALIMCERTH. 8 consecutive C2H2-type zinc fingers follow at residues 71–93, 99–121, 127–149, 155–177, 183–205, 211–233, 239–261, and 267–289; these read YKCD…QRIH, YKCS…QRTH, YTCD…QRSH, YLCS…RRTH, FKCL…QRTH, YKCN…KRVH, YKCG…QRVH, and YKCL…QATH. The C2H2-type 10; degenerate zinc-finger motif lies at 293-315; the sequence is FKCLEYEKSFNCSSDLIVHQRIH. The segment at 351 to 373 adopts a C2H2-type 11; degenerate zinc-finger fold; the sequence is YKYTVCDKSFHQSSALLQHQTVH. Phosphoserine is present on Ser391.

This sequence belongs to the krueppel C2H2-type zinc-finger protein family. As to quaternary structure, interacts with POU5F1.

The protein resides in the cytoplasm. The protein localises to the nucleus. Its function is as follows. Transcriptional activator. Important for maintenance of pluripotency in embryonic stem cells. Binds directly to the POU5F1 distal enhancer and the NANOG proximal promoter, and enhances expression of both genes. Can also bind to numerous other gene promoters and regulates expression of many other pluripotency factors, either directly or indirectly. Promotes inhibition of MAPK signaling during embryonic stem cell differentiation. The polypeptide is Zinc finger protein 322 (ZNF322) (Macaca fascicularis (Crab-eating macaque)).